The following is a 287-amino-acid chain: ATP synthase gamma chain (287 aa).

This sequence belongs to the ATPase gamma chain family. In terms of assembly, F-type ATPases have 2 components, CF(1) - the catalytic core - and CF(0) - the membrane proton channel. CF(1) has five subunits: alpha(3), beta(3), gamma(1), delta(1), epsilon(1). CF(0) has three main subunits: a, b and c.

It localises to the cell inner membrane. In terms of biological role, produces ATP from ADP in the presence of a proton gradient across the membrane. The gamma chain is believed to be important in regulating ATPase activity and the flow of protons through the CF(0) complex. The polypeptide is ATP synthase gamma chain (Stenotrophomonas maltophilia (strain R551-3)).